Reading from the N-terminus, the 93-residue chain is Pyrimidine/purine nucleoside phosphorylase (93 aa).

The protein belongs to the nucleoside phosphorylase PpnP family.

The catalysed reaction is a purine D-ribonucleoside + phosphate = a purine nucleobase + alpha-D-ribose 1-phosphate. The enzyme catalyses adenosine + phosphate = alpha-D-ribose 1-phosphate + adenine. It carries out the reaction cytidine + phosphate = cytosine + alpha-D-ribose 1-phosphate. It catalyses the reaction guanosine + phosphate = alpha-D-ribose 1-phosphate + guanine. The catalysed reaction is inosine + phosphate = alpha-D-ribose 1-phosphate + hypoxanthine. The enzyme catalyses thymidine + phosphate = 2-deoxy-alpha-D-ribose 1-phosphate + thymine. It carries out the reaction uridine + phosphate = alpha-D-ribose 1-phosphate + uracil. It catalyses the reaction xanthosine + phosphate = alpha-D-ribose 1-phosphate + xanthine. In terms of biological role, catalyzes the phosphorolysis of diverse nucleosides, yielding D-ribose 1-phosphate and the respective free bases. Can use uridine, adenosine, guanosine, cytidine, thymidine, inosine and xanthosine as substrates. Also catalyzes the reverse reactions. The sequence is that of Pyrimidine/purine nucleoside phosphorylase from Sorangium cellulosum (strain So ce56) (Polyangium cellulosum (strain So ce56)).